A 360-amino-acid polypeptide reads, in one-letter code: MLVWLAEHLVKYYSGFNVFSYLTFRAIVSLLTALFISLWMGPRMIARLQKLSFGQVVRNDGPESHFSKRGTPTMGGIMILTAITVSVLLWAYPSNPYVWCVLTVLIGYGIIGFVDDYRKVVRKDTKGLIARWKYFWMSVIALGVAFALYLAGKDTPATELVVPFFKDVMPQLGLLYILLAYFVIVGTGNAVNLTDGLDGLAIMPTVFVAAGFALVAWATGNMNFANYLHIPYLRHAGELVIVCTAIVGAGLGFLWFNTYPAQVFMGDVGSLALGGALGIIAVLLRQEFLLVIMGGVFVVETLSVILQVGSFKLRGQRIFRMAPIHHHYELKGWPEPRVIVRFWIISLMLVLIGLATLKVR.

The next 10 membrane-spanning stretches (helical) occupy residues 26 to 46 (AIVSLLTALFISLWMGPRMIA), 72 to 92 (PTMGGIMILTAITVSVLLWAY), 94 to 114 (SNPYVWCVLTVLIGYGIIGFV), 132 to 152 (WKYFWMSVIALGVAFALYLAG), 168 to 188 (VMPQLGLLYILLAYFVIVGTG), 199 to 219 (GLAIMPTVFVAAGFALVAWAT), 236 to 256 (AGELVIVCTAIVGAGLGFLWF), 263 to 283 (VFMGDVGSLALGGALGIIAVL), 288 to 308 (FLLVIMGGVFVVETLSVILQV), and 338 to 358 (VIVRFWIISLMLVLIGLATLK).

This sequence belongs to the glycosyltransferase 4 family. MraY subfamily. Mg(2+) serves as cofactor.

It is found in the cell inner membrane. The catalysed reaction is UDP-N-acetyl-alpha-D-muramoyl-L-alanyl-gamma-D-glutamyl-meso-2,6-diaminopimeloyl-D-alanyl-D-alanine + di-trans,octa-cis-undecaprenyl phosphate = di-trans,octa-cis-undecaprenyl diphospho-N-acetyl-alpha-D-muramoyl-L-alanyl-D-glutamyl-meso-2,6-diaminopimeloyl-D-alanyl-D-alanine + UMP. It functions in the pathway cell wall biogenesis; peptidoglycan biosynthesis. Its function is as follows. Catalyzes the initial step of the lipid cycle reactions in the biosynthesis of the cell wall peptidoglycan: transfers peptidoglycan precursor phospho-MurNAc-pentapeptide from UDP-MurNAc-pentapeptide onto the lipid carrier undecaprenyl phosphate, yielding undecaprenyl-pyrophosphoryl-MurNAc-pentapeptide, known as lipid I. This is Phospho-N-acetylmuramoyl-pentapeptide-transferase from Klebsiella pneumoniae (strain 342).